The following is a 464-amino-acid chain: Soluble pyridine nucleotide transhydrogenase (464 aa).

35–44 (DSRRQVGGNC) serves as a coordination point for FAD.

Belongs to the class-I pyridine nucleotide-disulfide oxidoreductase family. It depends on FAD as a cofactor.

The protein resides in the cytoplasm. The catalysed reaction is NAD(+) + NADPH = NADH + NADP(+). In terms of biological role, conversion of NADPH, generated by peripheral catabolic pathways, to NADH, which can enter the respiratory chain for energy generation. The polypeptide is Soluble pyridine nucleotide transhydrogenase (Pseudomonas fluorescens (strain Pf0-1)).